Consider the following 1598-residue polypeptide: Serine/threonine-protein kinase Nek1 (1598 aa).

The Protein kinase domain occupies 106-380; sequence YEVIRQIGAG…ALQCLGYTIF (275 aa). Residues 112–120 and Lys-135 each bind ATP; that span reads IGAGRFGEV. Residue Asp-240 is the Proton acceptor of the active site.

It belongs to the protein kinase superfamily. NEK Ser/Thr protein kinase family. NIMA subfamily.

It is found in the cytoplasm. The protein resides in the cytoskeleton. It localises to the microtubule organizing center. Its subcellular location is the centrosome. The protein localises to the spindle pole. The catalysed reaction is L-seryl-[protein] + ATP = O-phospho-L-seryl-[protein] + ADP + H(+). It carries out the reaction L-threonyl-[protein] + ATP = O-phospho-L-threonyl-[protein] + ADP + H(+). Phosphorylation status of the T-loop (amino acids 267-293) modulates kinase activity and subcellular localization of the protein. Probable serine/threonine-protein kinase. Involved in controlling centrosome splitting. Promotes separation of the centrosome outer cores. The sequence is that of Serine/threonine-protein kinase Nek1 from Toxoplasma gondii (strain ATCC 50611 / Me49).